Reading from the N-terminus, the 604-residue chain is Ras guanine nucleotide exchange factor H (604 aa).

Residues 1–26 are compositionally biased toward polar residues; that stretch reads MSNTNINVQSSTPKKSLGSSQYSLAG. The disordered stretch occupies residues 1–61; it reads MSNTNINVQS…QENSIDDSGS (61 aa). Positions 27–49 are enriched in low complexity; that stretch reads SSSSNLNNINNNNNNNNNNNNNS. The span at 50 to 61 shows a compositional bias: polar residues; that stretch reads TGQENSIDDSGS. The 33-residue stretch at 115-147 folds into the LisH domain; the sequence is NDTMLLKLIMQYFHEENLTTSLKKIQEETKVQF. Positions 221-335 constitute an N-terminal Ras-GEF domain; it reads PDGTIKAATF…AVINLKIENY (115 aa). The 227-residue stretch at 365–591 folds into the Ras-GEF domain; the sequence is DEEEIARQLC…EQPQLTLDLS (227 aa).

In terms of assembly, component of the Sca1 complex composed of at least gefA, gefH, scaA, phr, and the protein phosphatase 2A subunits pppA and pho2B. Interacts directly with gefA and phr.

It localises to the cell membrane. Its function is as follows. Promotes the exchange of Ras-bound GDP by GTP. Component of the Sca1 complex, a regulator of cell motility, chemotaxis and signal relay. The Sca1 complex is recruited to the plasma membrane in a chemoattractant- and F-actin-dependent manner and is enriched at the leading edge of chemotaxing cells where it regulates F-actin dynamics and signal relay by controlling the activation of rasC and the downstream target of rapamycin complex 2 (TORC2)-Akt/protein kinase B (PKB) pathway. This Dictyostelium discoideum (Social amoeba) protein is Ras guanine nucleotide exchange factor H (gefH).